Here is a 115-residue protein sequence, read N- to C-terminus: Large ribosomal subunit protein uL22 (115 aa).

It belongs to the universal ribosomal protein uL22 family. In terms of assembly, part of the 50S ribosomal subunit.

This protein binds specifically to 23S rRNA; its binding is stimulated by other ribosomal proteins, e.g. L4, L17, and L20. It is important during the early stages of 50S assembly. It makes multiple contacts with different domains of the 23S rRNA in the assembled 50S subunit and ribosome. Its function is as follows. The globular domain of the protein is located near the polypeptide exit tunnel on the outside of the subunit, while an extended beta-hairpin is found that lines the wall of the exit tunnel in the center of the 70S ribosome. The chain is Large ribosomal subunit protein uL22 from Enterococcus faecalis (strain ATCC 700802 / V583).